The chain runs to 347 residues: Outer membrane protein A (347 aa).

A signal peptide spans 1–21 (MKKQALTIIFLLVSLVTGIQA). 8 beta stranded membrane passes run 26-36 (HWYLGTKMGWS), 63-74 (APVFGLFLGYEF), 78-86 (FSFEIENDT), 105-116 (NSLQLATKLSYP), 121-129 (FHIYTQLGG), 154-163 (PNVSLGAEYI), 168-175 (FITRLDYT), and 194-202 (DVALSFGWK). Residues 207–218 (NINEIFSSYIPQ) are hinge-like. One can recognise an OmpA-like domain in the interval 220–347 (SDKQYVALNE…RRVEIEVLSD (128 aa)). Residues C321 and C333 are joined by a disulfide bond.

The protein belongs to the outer membrane OOP (TC 1.B.6) superfamily. OmpA family. As to quaternary structure, monomer and homodimer.

The protein resides in the cell outer membrane. Its function is as follows. With TolR probably plays a role in maintaining the position of the peptidoglycan cell wall in the periplasm. Acts as a porin with low permeability that allows slow penetration of small solutes; an internal gate slows down solute passage. The chain is Outer membrane protein A from Buchnera aphidicola subsp. Schizaphis graminum (strain Sg).